A 720-amino-acid polypeptide reads, in one-letter code: Pollen receptor-like kinase 1 (720 aa).

An LRR 1; degenerate repeat occupies 40–64; sequence LCSRGHLLIIFLLLVSPFNDAAVDV. An LRR 2; degenerate repeat occupies 123 to 146; the sequence is LGVLCYEGDVWGLQLENLDLSGVI. LRR repeat units follow at residues 154-179, 226-248, and 249-273; these read LHFL…SLEP, LPQV…HFPP, and NVLK…SLMD. Residues 288-319 are disordered; sequence LESACNSPSQEANNPDSRNSSTISGQSSTDVI. Residues 291-317 show a composition bias toward polar residues; sequence ACNSPSQEANNPDSRNSSTISGQSSTD. A helical membrane pass occupies residues 330 to 350; it reads MLIVAVCLVVLCLLIVLILII. Composition is skewed to polar residues over residues 356-382 and 389-405; these read SSSQ…TSSA and LSGN…NSNK. The tract at residues 356 to 409 is disordered; it reads SSSQNPQPVESNYSNNDRDQNAFTSSAPDDHVTLSGNSTYSNNQHSNSNKAEAP. The Protein kinase domain maps to 434–702; that stretch reads RASAEVLGSG…KEVVQSIQSL (269 aa). ATP contacts are provided by residues 440–448 and lysine 462; that span reads LGSGNLGSS.

It belongs to the protein kinase superfamily. In terms of assembly, interacts with KIP1. Post-translationally, autophosphorylated. Expressed in mature pollen grains and pollen tubes, but not in style, petal, leaf, root or sepal. Very low expression in the ovary.

The protein resides in the microsome membrane. The protein localises to the cytoplasm. The enzyme catalyses L-seryl-[protein] + ATP = O-phospho-L-seryl-[protein] + ADP + H(+). The catalysed reaction is L-threonyl-[protein] + ATP = O-phospho-L-threonyl-[protein] + ADP + H(+). It catalyses the reaction L-tyrosyl-[protein] + ATP = O-phospho-L-tyrosyl-[protein] + ADP + H(+). Functionally, dual-specificity kinase with both serine/threonine and tyrosine kinase activities. Required for postmeiotic development of microspores. Involved in embryo sac development at the late stages of megagametogenesis. Involved in the phosphorylation of KIP1. This Petunia integrifolia (Violet-flowered petunia) protein is Pollen receptor-like kinase 1.